The following is a 317-amino-acid chain: Protein CbxX, plasmid (317 aa).

85-92 (GNPGTGKT) lines the ATP pocket.

The protein belongs to the CbxX/CfxQ family.

In terms of biological role, seems to be necessary for the expression of RuBisCO. The protein is Protein CbxX, plasmid (cbxXP) of Cupriavidus necator (strain ATCC 17699 / DSM 428 / KCTC 22496 / NCIMB 10442 / H16 / Stanier 337) (Ralstonia eutropha).